Reading from the N-terminus, the 99-residue chain is Nucleoid-associated protein SEQ_0368 (99 aa).

The protein belongs to the YbaB/EbfC family. As to quaternary structure, homodimer.

Its subcellular location is the cytoplasm. The protein resides in the nucleoid. Binds to DNA and alters its conformation. May be involved in regulation of gene expression, nucleoid organization and DNA protection. This is Nucleoid-associated protein SEQ_0368 from Streptococcus equi subsp. equi (strain 4047).